A 416-amino-acid polypeptide reads, in one-letter code: Serine/threonine-protein phosphatase PP2A-like PPG1 (416 aa).

Mn(2+)-binding residues include aspartate 62, histidine 64, aspartate 90, and asparagine 122. The active-site Proton donor is histidine 123. Mn(2+) contacts are provided by histidine 173 and histidine 248. The tract at residues 363-391 (EDTLQGKSVNGINFDDELSTSDDTSGSGG) is disordered.

The protein belongs to the PPP phosphatase family. PP-2A subfamily. Mn(2+) is required as a cofactor.

It catalyses the reaction O-phospho-L-seryl-[protein] + H2O = L-seryl-[protein] + phosphate. The enzyme catalyses O-phospho-L-threonyl-[protein] + H2O = L-threonyl-[protein] + phosphate. Inhibited by okadaic acid, a specific inhibitor of serine/threonine phosphatases of types 1, 2A and 2B. Serine/threonine-protein phosphatase that plays an important role in controlling colony morphology, filament extension and agar invasion. Down-regulates expression of NRG1 and affects the expression of multiple filament-specific transcripts in response to serum and 37 degrees Celsius. Plays a crucial role in virulence in a mouse model of systemic candidiasis. The polypeptide is Serine/threonine-protein phosphatase PP2A-like PPG1 (Candida albicans (strain SC5314 / ATCC MYA-2876) (Yeast)).